Here is a 742-residue protein sequence, read N- to C-terminus: Eukaryotic translation initiation factor 3 subunit B (742 aa).

The span at 1-10 (MAPSFDTLSE) shows a compositional bias: polar residues. The segment at 1–20 (MAPSFDTLSEQDLHEEEEEE) is disordered. The RRM domain maps to 40–126 (TFVVIDGLPI…HTLAVNKLMD (87 aa)). 5 WD repeats span residues 193 to 230 (AHWT…KLKQ), 232 to 290 (PHPF…RSFV), 304 to 345 (QPKK…LLGK), 515 to 558 (IEKK…EKPE), and 573 to 611 (VEHY…HTFA).

Belongs to the eIF-3 subunit B family. As to quaternary structure, component of the eukaryotic translation initiation factor 3 (eIF-3) complex.

The protein resides in the cytoplasm. RNA-binding component of the eukaryotic translation initiation factor 3 (eIF-3) complex, which is involved in protein synthesis of a specialized repertoire of mRNAs and, together with other initiation factors, stimulates binding of mRNA and methionyl-tRNAi to the 40S ribosome. The eIF-3 complex specifically targets and initiates translation of a subset of mRNAs involved in cell proliferation. The chain is Eukaryotic translation initiation factor 3 subunit B (prt1) from Aspergillus terreus (strain NIH 2624 / FGSC A1156).